Reading from the N-terminus, the 292-residue chain is Transcription factor-like protein DPA (292 aa).

Positions 1-25 (MSMEMELFVTPEKQRQHPSVSVEKT) are disordered. The DNA-binding element occupies 51 to 135 (GGGLRQFSVM…KKEIRWKGLP (85 aa)). The DEF box signature appears at 101-135 (NEKNIRRRVYDALNVFMALDIIARDKKEIRWKGLP). Positions 163–184 (LKELREKVSSLESLMSRNQEMV) form a coiled coil. The interval 246–280 (QEQNRVSSSSSTHHQSQHSSAHSSSSSCIASGTSG) is disordered. The segment covering 252–280 (SSSSSTHHQSQHSSAHSSSSSCIASGTSG) has biased composition (low complexity).

It belongs to the E2F/DP family. As to quaternary structure, heterodimer with E2F. Interacts preferentially with E2FA and E2FB, but also with E2FC. Strongly expressed in the actively dividing tissues of the shoot apical meristem, young leaf primordia, the vascular tissues of the maturing leaf primordia and axillary buds.

Its subcellular location is the cytoplasm. It is found in the nucleus. In terms of biological role, involved in the regulation of the G1/S transition. Increases the DNA binding and the transactivation activities of E2F proteins after heterodimerization. The complex DPA/E2FA promotes cell division and acts as a regulator of the endocycle. Positively regulates the activity of S phase-specific genes. This is Transcription factor-like protein DPA (DPA) from Arabidopsis thaliana (Mouse-ear cress).